Consider the following 344-residue polypeptide: HTH-type transcriptional regulator XC_2801 (344 aa).

An HTH lysR-type domain is found at 3–60 (HDLNDTLIFVKVVEQGSFIAAANSLGLPKTTVSRKVQELETRLGARLLHRTTRRIGLT). The segment at residues 20–39 (FIAAANSLGLPKTTVSRKVQ) is a DNA-binding region (H-T-H motif).

This sequence belongs to the LysR transcriptional regulatory family. Interacts with the cyclic di-GMP effector XC_3703.

With respect to regulation, activity is regulated by cyclic di-GMP. Cyclic di-GMP specifically binds to XC_3703, which inhibits the interaction of the XC_2801-XC_3703 complex with DNA and prevents the transcription of the target genes. In terms of biological role, transcriptional regulator that directly or indirectly regulates the expression of virulence-related genes, including flhB, aaeA, fliL and flgG. Binds to the promoter of the target genes only in the presence of XC_3703. The sequence is that of HTH-type transcriptional regulator XC_2801 from Xanthomonas campestris pv. campestris (strain 8004).